The chain runs to 3414 residues: Genome polyprotein (3414 aa).

A disordered region spans residues 1-30 (MVKKAILKGKGGGPPRRVSKETATKTRQPR). Residues 1-98 (MVKKAILKGK…LQKRGKRRSA (98 aa)) are Cytoplasmic-facing. A propeptide spans 97–117 (SATDWMSWLLVITLLGMTIAA) (ER anchor for the capsid protein C, removed in mature form by serine protease NS3). The helical transmembrane segment at 99-119 (TDWMSWLLVITLLGMTIAATV) threads the bilayer. Over 120-242 (RKERDGSTVI…HLTRVEGWVW (123 aa)) the chain is Extracellular. A glycan (N-linked (GlcNAc...) asparagine; by host) is linked at Asn-144. The chain crosses the membrane as a helical span at residues 243-260 (KNRLLALAMVTVVWLTLE). A topological domain (cytoplasmic) is located at residue Ser-261. Residues 262 to 280 (VVTRVAVLVVLLCLAPVYA) traverse the membrane as a helical segment. Residues 281–727 (SRCTHLENRD…HTVLGGAFNS (447 aa)) lie on the Extracellular side of the membrane. 6 disulfides stabilise this stretch: Cys-283-Cys-310, Cys-340-Cys-396, Cys-340-Cys-401, Cys-354-Cys-385, Cys-372-Cys-396, and Cys-372-Cys-401. The fusion peptide stretch occupies residues 378-391 (DRGWGNHCGLFGKG). A glycan (N-linked (GlcNAc...) asparagine; by host) is linked at Asn-434. 2 disulfide bridges follow: Cys-466/Cys-570 and Cys-587/Cys-618. A helical membrane pass occupies residues 728–748 (IFGGVGFLPKLLLGVALAWLG). The Extracellular segment spans residues 749–755 (LNMRNPT). A helical transmembrane segment spans residues 756–776 (MSMSFLLAGVLVLAMTLGVGA). The Extracellular segment spans residues 777–1132 (DVGCAVDTER…RSMVVADNGE (356 aa)). 6 cysteine pairs are disulfide-bonded: Cys-780-Cys-791, Cys-831-Cys-920, Cys-955-Cys-1000, Cys-1057-Cys-1106, Cys-1068-Cys-1090, and Cys-1089-Cys-1093. Asn-861, Asn-983, and Asn-999 each carry an N-linked (GlcNAc...) asparagine; by host glycan. Residues 1133–1153 (LLSEGGVPGIVALFVVLEYII) form a helical membrane-spanning segment. The Cytoplasmic portion of the chain corresponds to 1154-1158 (RRRPS). Residues 1159–1179 (TGSTVVWGGIVVLALLVTGMV) traverse the membrane as a helical segment. Residues 1180-1187 (RMESLVRY) are Lumenal-facing. The helical transmembrane segment at 1188-1208 (VVAVGITFHLELGPEIVALML) threads the bilayer. Over 1209–1293 (LQAVFELRVG…LLMALMTQQD (85 aa)) the chain is Cytoplasmic. Residues 1294-1314 (VVTVHHGLVCFLSAASACSIW) form a helical membrane-spanning segment. Topologically, residues 1315–1327 (RLLRGHREQKGLT) are lumenal. A helical membrane pass occupies residues 1328–1348 (WIVPLARLLGGEGSGIRLLAF). Topologically, residues 1349–1359 (WELSAHRGRRS) are cytoplasmic. A helical transmembrane segment spans residues 1360–1377 (FSEPLTVVGVMLTLASGM). The Lumenal portion of the chain corresponds to 1378 to 1382 (MRHTS). Residues 1383-1403 (QEALCALAVASFLLLMLVLGT) traverse the membrane as a helical segment. The Cytoplasmic segment spans residues 1404–1454 (RKMQLVAEWSGCVEWHPELVNEGGEVSLRVRQDAMGNFHLTELEKEERMMA). An interacts with and activates NS3 protease region spans residues 1410–1449 (AEWSGCVEWHPELVNEGGEVSLRVRQDAMGNFHLTELEKE). Residues 1455 to 1475 (FWLIAGLAASAIHWSGIIGVM) constitute an intramembrane region (helical). The Cytoplasmic segment spans residues 1476 to 2160 (GLWTLTKMLR…RMAERDAPEA (685 aa)). The 180-residue stretch at 1490–1669 (SDLVFSGQGG…EAEKSRPNLP (180 aa)) folds into the Peptidase S7 domain. Residues His-1543, Asp-1567, and Ser-1627 each act as charge relay system; for serine protease NS3 activity in the active site. Positions 1675-1831 (TGWTSKGQIT…ESNGAITSEE (157 aa)) constitute a Helicase ATP-binding domain. Position 1688 to 1695 (1688 to 1695 (MHPGSGKT)) interacts with ATP. The short motif at 1779–1782 (DEAH) is the DEAH box element. The 160-residue stretch at 1841–2000 (DGFDWITEYE…TLRGPVATFY (160 aa)) folds into the Helicase C-terminal domain. N6-acetyllysine; by host is present on Lys-1883. The helical transmembrane segment at 2161 to 2181 (FLTMVEMMVLGLATLGVIWCF) threads the bilayer. The Lumenal segment spans residues 2182-2189 (VVRTSISR). The segment at residues 2190 to 2210 (MMLGTLVLLASLLLLWAGGVG) is an intramembrane region (helical). Residue Tyr-2211 is a topological domain, lumenal. Residues 2212-2232 (GNMAGVALIFYTLLTVLQPEA) form a helical membrane-spanning segment. Residues 2233–2244 (GKQRSSDDNKLA) lie on the Cytoplasmic side of the membrane. Residues 2245 to 2265 (YFLLTLCSLAGLVAANEMGFL) traverse the membrane as a helical segment. The Lumenal portion of the chain corresponds to 2266–2299 (EKTKADLSTVLWSEREEPRPWSEWTNVDIQPARS). An intramembrane region (helical) is located at residues 2300–2320 (WGTYVLVVSLFTPYIIHQLQT). At 2321–2343 (KIQQLVNSAVASGAQAMRDLGGG) the chain is on the lumenal side. Positions 2344-2364 (APFFGVAGHVMTLGVVSLIGA) form an intramembrane region, helical. Topologically, residues 2365 to 2368 (TPTS) are lumenal. Residues 2369-2389 (LMVGVGLAALHLAIVVSGLEA) traverse the membrane as a helical segment. Over 2390–2432 (ELTQRAHKVFFSAMVRNPMVDGDVINPFGEGEAKPALYERRMS) the chain is Cytoplasmic. Residues 2433-2453 (LVLAIVLCLMSVVMNRTVASI) form a helical membrane-spanning segment. Residues 2454-2477 (TEASAVGLAAAGQLLRPEADTLWT) are Lumenal-facing. The chain crosses the membrane as a helical span at residues 2478-2498 (MPVACGMSGVVRGSLWGFLPL). The Cytoplasmic segment spans residues 2499–3414 (GHRLWLRASG…WELRLESSII (916 aa)). One can recognise an mRNA cap 0-1 NS5-type MT domain in the interval 2512–2776 (GGSEGDTLGD…ELDLGVGTRC (265 aa)). Ser-2567 contacts S-adenosyl-L-methionine. At Ser-2567 the chain carries Phosphoserine. The active-site For 2'-O-MTase activity is the Lys-2572. Residues Gly-2597, Trp-2598, Thr-2615, Ile-2616, Asp-2642, and Val-2643 each contribute to the S-adenosyl-L-methionine site. Asp-2657 (for 2'-O-MTase activity) is an active-site residue. Ile-2658 contacts S-adenosyl-L-methionine. Catalysis depends on for 2'-O-MTase activity residues Lys-2694 and Glu-2730. The interaction with host SCRIB stretch occupies residues 2730–2734 (EMYYS). Tyr-2732 provides a ligand contact to S-adenosyl-L-methionine. Zn(2+) is bound by residues Glu-2950, His-2954, Cys-2959, and Cys-2962. The RdRp catalytic domain maps to 3040–3189 (GLFYADDTAG…RPLDDRFGKA (150 aa)). 3 residues coordinate Zn(2+): His-3224, Cys-3240, and Cys-3359.

This sequence in the N-terminal section; belongs to the class I-like SAM-binding methyltransferase superfamily. mRNA cap 0-1 NS5-type methyltransferase family. Homodimer. Interacts (via N-terminus) with host EXOC1 (via C-terminus); this interaction results in EXOC1 degradation through the proteasome degradation pathway. In terms of assembly, forms heterodimers with envelope protein E in the endoplasmic reticulum and Golgi. As to quaternary structure, homodimer; in the endoplasmic reticulum and Golgi. Interacts with protein prM. Interacts with non-structural protein 1. Homodimer; Homohexamer when secreted. Interacts with envelope protein E. In terms of assembly, interacts (via N-terminus) with serine protease NS3. As to quaternary structure, forms a heterodimer with serine protease NS3. May form homooligomers. Forms a heterodimer with NS2B. Interacts with NS4B. Interacts with unphosphorylated RNA-directed RNA polymerase NS5; this interaction stimulates RNA-directed RNA polymerase NS5 guanylyltransferase activity. In terms of assembly, interacts with serine protease NS3. As to quaternary structure, homodimer. Interacts with host STAT2; this interaction inhibits the phosphorylation of the latter, and, when all viral proteins are present (polyprotein), targets STAT2 for degradation. Interacts with serine protease NS3. Interacts with host SCRIB; this interaction targets NS5 to the cell membrane periphery and nucleus, thereby allowing efficient host nuclear STAT1 inhibition. Specific enzymatic cleavages in vivo yield mature proteins. Cleavages in the lumen of endoplasmic reticulum are performed by host signal peptidase, whereas cleavages in the cytoplasmic side are performed by serine protease NS3. Signal cleavage at the 2K-4B site requires a prior NS3 protease-mediated cleavage at the 4A-2K site. In terms of processing, cleaved in post-Golgi vesicles by a host furin, releasing the mature small envelope protein M, and peptide pr. This cleavage is incomplete as up to 30% of viral particles still carry uncleaved prM. Post-translationally, N-glycosylated. N-glycosylated. The excreted form is glycosylated and this is required for efficient secretion of the protein from infected cells. In terms of processing, acetylated by host KAT5. Acetylation modulates NS3 RNA-binding and unwinding activities and plays an important positive role for viral replication. Post-translationally, phosphorylated on serines residues. This phosphorylation may trigger NS5 nuclear localization.

It is found in the virion. It localises to the host nucleus. Its subcellular location is the host cytoplasm. The protein localises to the host perinuclear region. The protein resides in the secreted. It is found in the virion membrane. It localises to the host endoplasmic reticulum membrane. It carries out the reaction Selective hydrolysis of -Xaa-Xaa-|-Yaa- bonds in which each of the Xaa can be either Arg or Lys and Yaa can be either Ser or Ala.. It catalyses the reaction RNA(n) + a ribonucleoside 5'-triphosphate = RNA(n+1) + diphosphate. The enzyme catalyses a ribonucleoside 5'-triphosphate + H2O = a ribonucleoside 5'-diphosphate + phosphate + H(+). The catalysed reaction is ATP + H2O = ADP + phosphate + H(+). It carries out the reaction a 5'-end (5'-triphosphoguanosine)-ribonucleoside in mRNA + S-adenosyl-L-methionine = a 5'-end (N(7)-methyl 5'-triphosphoguanosine)-ribonucleoside in mRNA + S-adenosyl-L-homocysteine. It catalyses the reaction a 5'-end (N(7)-methyl 5'-triphosphoguanosine)-ribonucleoside in mRNA + S-adenosyl-L-methionine = a 5'-end (N(7)-methyl 5'-triphosphoguanosine)-(2'-O-methyl-ribonucleoside) in mRNA + S-adenosyl-L-homocysteine + H(+). Its function is as follows. Plays a role in virus budding by binding to the cell membrane and gathering the viral RNA into a nucleocapsid that forms the core of a mature virus particle. During virus entry, may induce genome penetration into the host cytoplasm after hemifusion induced by the surface proteins. Can migrate to the cell nucleus where it modulates host functions. Inhibits RNA silencing by interfering with host Dicer. In terms of biological role, prevents premature fusion activity of envelope proteins in trans-Golgi by binding to envelope protein E at pH6.0. After virion release in extracellular space, gets dissociated from E dimers. Functionally, acts as a chaperone for envelope protein E during intracellular virion assembly by masking and inactivating envelope protein E fusion peptide. prM is the only viral peptide matured by host furin in the trans-Golgi network probably to avoid catastrophic activation of the viral fusion activity in acidic Golgi compartment prior to virion release. prM-E cleavage is inefficient, and many virions are only partially matured. These uncleaved prM would play a role in immune evasion. Its function is as follows. May play a role in virus budding. Exerts cytotoxic effects by activating a mitochondrial apoptotic pathway through M ectodomain. May display a viroporin activity. Binds to host cell surface receptor and mediates fusion between viral and cellular membranes. Envelope protein is synthesized in the endoplasmic reticulum in the form of heterodimer with protein prM. They play a role in virion budding in the ER, and the newly formed immature particle is covered with 60 spikes composed of heterodimer between precursor prM and envelope protein E. The virion is transported to the Golgi apparatus where the low pH causes dissociation of PrM-E heterodimers and formation of E homodimers. prM-E cleavage is inefficient, and many virions are only partially matured. These uncleaved prM would play a role in immune evasion. In terms of biological role, involved in immune evasion, pathogenesis and viral replication. Once cleaved off the polyprotein, is targeted to three destinations: the viral replication cycle, the plasma membrane and the extracellular compartment. Essential for viral replication. Required for formation of the replication complex and recruitment of other non-structural proteins to the ER-derived membrane structures. Excreted as a hexameric lipoparticle that plays a role against host immune response. Antagonizing the complement function. Binds to the host macrophages and dendritic cells. Inhibits signal transduction originating from Toll-like receptor 3 (TLR3). Functionally, component of the viral RNA replication complex that functions in virion assembly and antagonizes the host immune response. Its function is as follows. Required cofactor for the serine protease function of NS3. May have membrane-destabilizing activity and form viroporins. Displays three enzymatic activities: serine protease, NTPase and RNA helicase. NS3 serine protease, in association with NS2B, performs its autocleavage and cleaves the polyprotein at dibasic sites in the cytoplasm: C-prM, NS2A-NS2B, NS2B-NS3, NS3-NS4A, NS4A-2K and NS4B-NS5. NS3 RNA helicase binds RNA and unwinds dsRNA in the 3' to 5' direction. In terms of biological role, regulates the ATPase activity of the NS3 helicase activity. NS4A allows NS3 helicase to conserve energy during unwinding. Functionally, functions as a signal peptide for NS4B and is required for the interferon antagonism activity of the latter. Its function is as follows. Induces the formation of ER-derived membrane vesicles where the viral replication takes place. Inhibits interferon (IFN)-induced host STAT1 phosphorylation and nuclear translocation, thereby preventing the establishment of cellular antiviral state by blocking the IFN-alpha/beta pathway. Inhibits STAT2 translocation in the nucleus after IFN-alpha treatment. Replicates the viral (+) and (-) genome, and performs the capping of genomes in the cytoplasm. NS5 methylates viral RNA cap at guanine N-7 and ribose 2'-O positions. Besides its role in genome replication, also prevents the establishment of cellular antiviral state by blocking the interferon-alpha/beta (IFN-alpha/beta) signaling pathway. Inhibits host TYK2 and STAT2 phosphorylation, thereby preventing activation of JAK-STAT signaling pathway. The protein is Genome polyprotein of Tick-borne encephalitis virus (strain Hypr) (TBEV).